Reading from the N-terminus, the 198-residue chain is Pyridoxine/pyridoxamine 5'-phosphate oxidase (198 aa).

FMN contacts are provided by residues 47-52, 62-63, R68, K69, and Q91; these read RMVLVK and FT. Residue K52 participates in substrate binding. Substrate-binding residues include Y109, R113, and S117. Residues 126–127 and W171 each bind FMN; that span reads QS. 177 to 179 is a substrate binding site; that stretch reads RLH. R181 is a binding site for FMN.

It belongs to the pyridoxamine 5'-phosphate oxidase family. As to quaternary structure, homodimer. It depends on FMN as a cofactor.

The enzyme catalyses pyridoxamine 5'-phosphate + O2 + H2O = pyridoxal 5'-phosphate + H2O2 + NH4(+). It carries out the reaction pyridoxine 5'-phosphate + O2 = pyridoxal 5'-phosphate + H2O2. It functions in the pathway cofactor metabolism; pyridoxal 5'-phosphate salvage; pyridoxal 5'-phosphate from pyridoxamine 5'-phosphate: step 1/1. It participates in cofactor metabolism; pyridoxal 5'-phosphate salvage; pyridoxal 5'-phosphate from pyridoxine 5'-phosphate: step 1/1. Its function is as follows. Catalyzes the oxidation of either pyridoxine 5'-phosphate (PNP) or pyridoxamine 5'-phosphate (PMP) into pyridoxal 5'-phosphate (PLP). This is Pyridoxine/pyridoxamine 5'-phosphate oxidase from Anaeromyxobacter dehalogenans (strain 2CP-C).